The sequence spans 103 residues: Integration host factor subunit alpha (103 aa).

The interval 51-73 (FGNFQLRDKPQRPGRNPKTGEEI) is disordered.

This sequence belongs to the bacterial histone-like protein family. As to quaternary structure, heterodimer of an alpha and a beta chain.

In terms of biological role, this protein is one of the two subunits of integration host factor, a specific DNA-binding protein that functions in genetic recombination as well as in transcriptional and translational control. The polypeptide is Integration host factor subunit alpha (Azoarcus sp. (strain BH72)).